A 615-amino-acid chain; its full sequence is Forkhead box protein O (615 aa).

5 disordered regions span residues 39–77 (RARS…DSQQ), 182–205 (KSVR…RAKK), 217–269 (GLND…RLSP), 318–359 (FSAA…APGY), and 389–409 (NSVT…SDSL). Residue Thr-44 is modified to Phosphothreonine; by PKB/AKT1. The segment covering 63–77 (TKASNQQLAPGDSQQ) has biased composition (polar residues). Phosphoserine is present on Ser-75. The fork-head DNA-binding region spans 95-201 (WGNLSYADLI…ETSRYEKRRG (107 aa)). Ser-190 bears the Phosphoserine; by PKB/AKT1 mark. Polar residues-rich tracts occupy residues 221–230 (ATPSPSSSVS) and 256–265 (RASSNASSCG). Position 259 is a phosphoserine; by PKB/AKT1 (Ser-259). Phosphoserine is present on residues Ser-262, Ser-263, and Ser-268. Positions 326–335 (SQPPPPPYQP) are enriched in pro residues. Positions 336-351 (PQHQQAQQQQQQSPYA) are enriched in low complexity.

In terms of assembly, interacts with melt.

It localises to the cytoplasm. The protein localises to the nucleus. Functionally, transcription factor involved in the regulation of the insulin signaling pathway. Consistently activates both the downstream target Thor\d4EBP and the feedback control target InR. Involved in negative regulation of the cell cycle, modulating cell growth and proliferation. In response to cellular stresses, such as nutrient deprivation or increased levels of reactive oxygen species, foxo is activated and inhibits growth through the action of target genes such as Thor. Foxo activated in the adult fat body can regulate lifespan in adults; an insulin peptide itself may function as one secondary messenger of insulin-regulated aging. Also regulates Lip4, homolog of human acid lipases, thereby acting as a key modulator of lipid metabolism by insulin signaling and integrates insulin responses to glucose and lipid homeostasis. The protein is Forkhead box protein O of Drosophila erecta (Fruit fly).